We begin with the raw amino-acid sequence, 441 residues long: Zinc finger and BTB domain-containing protein 8A (441 aa).

One can recognise a BTB domain in the interval 24–92; sequence CDCSILVEGK…VYSGKLSLTG (69 aa). Residues 135–248 form a disordered region; it reads LSDKDTGSNG…HVSQSEEQVQ (114 aa). Serine 161 and serine 167 each carry phosphoserine. Residues lysine 178, lysine 182, and lysine 199 each participate in a glycyl lysine isopeptide (Lys-Gly) (interchain with G-Cter in SUMO2) cross-link. Basic and acidic residues-rich tracts occupy residues 198-208 and 227-242; these read AKHEQRKDPIK and GKGD…HVSQ. 2 consecutive C2H2-type zinc fingers follow at residues 282–304 and 310–333; these read FKCP…LRCH and YPCQ…RTIH. Lysine 437 is covalently cross-linked (Glycyl lysine isopeptide (Lys-Gly) (interchain with G-Cter in SUMO2)).

The protein localises to the nucleus. Its function is as follows. May be involved in transcriptional regulation. This is Zinc finger and BTB domain-containing protein 8A (Zbtb8a) from Rattus norvegicus (Rat).